Consider the following 292-residue polypeptide: Probable septum site-determining protein MinC (292 aa).

The tract at residues 112–188 (DTAPPNDVAT…PQSSSALVIT (77 aa)) is disordered. Low complexity predominate over residues 128-137 (EATAEAAAKA). A compositionally biased stretch (acidic residues) spans 140-150 (QDDEAYGEQAD). Over residues 171–185 (ANRPTATPPQSSSAL) the composition is skewed to polar residues.

Belongs to the MinC family. In terms of assembly, interacts with MinD and FtsZ.

In terms of biological role, cell division inhibitor that blocks the formation of polar Z ring septums. Rapidly oscillates between the poles of the cell to destabilize FtsZ filaments that have formed before they mature into polar Z rings. Prevents FtsZ polymerization. The chain is Probable septum site-determining protein MinC from Bordetella bronchiseptica (strain ATCC BAA-588 / NCTC 13252 / RB50) (Alcaligenes bronchisepticus).